Here is an 820-residue protein sequence, read N- to C-terminus: Sucrose synthase 2 (820 aa).

The tract at residues 276–753 (MVFNVVILSP…GLKRIYEKYT (478 aa)) is GT-B glycosyltransferase.

This sequence belongs to the glycosyltransferase 1 family. Plant sucrose synthase subfamily.

It carries out the reaction an NDP-alpha-D-glucose + D-fructose = a ribonucleoside 5'-diphosphate + sucrose + H(+). Functionally, sucrose-cleaving enzyme that provides UDP-glucose and fructose for various metabolic pathways. The protein is Sucrose synthase 2 of Tulipa gesneriana (Garden tulip).